The chain runs to 1432 residues: ABC transporter asL7 (1432 aa).

Residues 1 to 20 show a composition bias toward polar residues; sequence MFDTTKLQSSTQDGSTSSVT. The interval 1–36 is disordered; sequence MFDTTKLQSSTQDGSTSSVTGEPIFGANDPNSELNP. The ABC transporter 1 domain maps to 91-341; that stretch reads LALPGMLIRN…FERLGFECPS (251 aa). N265 is a glycosylation site (N-linked (GlcNAc...) asparagine). A run of 6 helical transmembrane segments spans residues 450 to 470, 484 to 504, 530 to 550, 559 to 579, 597 to 617, and 702 to 722; these read PTIV…SLFF, VVLF…VMTL, VLMD…VFYF, GNFF…SGIF, MIPA…MVPI, and IGIV…TSEY. The ABC transporter 2 domain maps to 786–1029; that stretch reads FHWRNVCYDI…TLVEYFERKA (244 aa). ATP is bound at residue 822-829; the sequence is GVSGAGKT. The N-linked (GlcNAc...) asparagine glycan is linked to N1017. Residues 1076 to 1095 form a disordered region; sequence LSRLREHGSQSNSHDSEKSE. The next 6 helical transmembrane spans lie at 1135–1155, 1166–1186, 1215–1235, 1251–1271, 1279–1299, and 1317–1337; these read FALC…SPLS, VFQL…QFII, IPYY…PIGL, LMWL…HFCI, AGAN…GALI, and LSYL…VTCA. N1371 carries an N-linked (GlcNAc...) asparagine glycan. A helical transmembrane segment spans residues 1402–1422; that stretch reads FGIIWVYVIFNISAAITLYWV.

The protein belongs to the ABC transporter superfamily. ABCG family. PDR (TC 3.A.1.205) subfamily.

The protein localises to the cell membrane. Its function is as follows. ABC transporter; part of the gene cluster that mediates the biosynthesis of xenovulene A, an unusual meroterpenoid that has potent inhibitory effects on the human gamma-aminobutyrate A (GABAA) benzodiazepine receptor. In Sarocladium schorii (Acremonium strictum (strain IMI 501407)), this protein is ABC transporter asL7.